We begin with the raw amino-acid sequence, 157 residues long: uncharacterized protein (157 aa).

An N-acetyltransferase domain is found at 9–154 (LLINYKTLDE…ETNSNAITNE (146 aa)).

This is an uncharacterized protein from Bacillus mycoides (strain KBAB4) (Bacillus weihenstephanensis).